The primary structure comprises 630 residues: CREB-regulated transcription coactivator 1 (630 aa).

Residues Ser64 and Ser113 each carry the phosphoserine modification. Disordered stretches follow at residues 142 to 174 (ADTS…GPQD), 187 to 221 (GMEE…VPGI), 256 to 331 (SPLP…LSPL), and 356 to 475 (QAGS…HTST). The residue at position 149 (Thr149) is a Phosphothreonine. The residue at position 151 (Ser151) is a Phosphoserine; by SIK1 and SIK2. Positions 151–167 (SDSALHQSTMTPTQAES) are enriched in polar residues. Thr161 carries the phosphothreonine modification. The segment covering 194–208 (ETDKTLSKQSWDSKK) has biased composition (basic and acidic residues). Residues 242–258 (TGGSLPDLSTIHFPSPL) carry the Nuclear export signal motif. Residues 256–270 (SPLPTPLDPEEPPFP) are compositionally biased toward pro residues. Polar residues-rich tracts occupy residues 292–301 (GMNTPSSSPQ) and 310–331 (LSLS…LSPL). The span at 361–384 (QPPPQPQPPPPPPPVSQQQPPPPQ) shows a compositional bias: pro residues. Residues 385 to 394 (VSVGLPQGGP) are compositionally biased toward low complexity. Polar residues-rich tracts occupy residues 414-426 (VPST…TESP) and 450-475 (PATQ…HTST).

The protein belongs to the TORC family. In terms of assembly, binds, as a tetramer, through its N-terminal region, with the bZIP domain of CREB1. 'Arg-314' in the bZIP domain of CREB1 is essential for this interaction. Interaction, via its C-terminal, with TAF4, enhances recruitment of TAF4 to CREB1. Interacts with 14-3-3 proteins, including YWHAE/14-3-3 epsilon. Interacts with calmodulin-dependent catalytic subunit PPP3CA/calcineurin A. In terms of processing, phosphorylation/dephosphorylation states of Ser-151 are required for regulating transduction of CREB activity. TORCs are inactive when phosphorylated, and active when dephosphorylated at this site. This primary site of phosphorylation is mediated by SIKs (SIK1 and SIK2), is regulated by cAMP and calcium levels and is dependent on the phosphorylation of SIKs by LKB1. In terms of tissue distribution, highly expressed in developing cortical neurons, peaking during dendrite development.

It localises to the cytoplasm. The protein resides in the nucleus. In terms of biological role, transcriptional coactivator for CREB1 which activates transcription through both consensus and variant cAMP response element (CRE) sites. Acts as a coactivator, in the SIK/TORC signaling pathway, being active when dephosphorylated and acts independently of CREB1 'Ser-133' phosphorylation. Enhances the interaction of CREB1 with TAF4. Regulates the expression of specific CREB-activated genes such as the steroidogenic gene, StAR. Potent coactivator of PGC1alpha and inducer of mitochondrial biogenesis in muscle cells. In the hippocampus, involved in late-phase long-term potentiation (L-LTP) maintenance at the Schaffer collateral-CA1 synapses. May be required for dendritic growth of developing cortical neurons. In concert with SIK1, regulates the light-induced entrainment of the circadian clock. In response to light stimulus, coactivates the CREB-mediated transcription of PER1 which plays an important role in the photic entrainment of the circadian clock. This Rattus norvegicus (Rat) protein is CREB-regulated transcription coactivator 1 (Crtc1).